The primary structure comprises 185 residues: Casparian strip membrane protein 1 (185 aa).

The Cytoplasmic portion of the chain corresponds to 1–32 (MKAVSIEAGERSKAKRVHGVNRGISVFDLVLR). Residues 33 to 53 (IVALVGTLASAVAMGTAGQAL) form a helical membrane-spanning segment. At 54 to 73 (SFSTQIVNFEAQYDDIDAFK) the chain is on the extracellular side. A helical transmembrane segment spans residues 74-94 (FFVVSNSITCVYLALSIPISI). Residues 95–106 (FHIIRSRAGKSR) lie on the Cytoplasmic side of the membrane. The chain crosses the membrane as a helical span at residues 107 to 127 (VLLIVLDAIMLVFLTSGASAA). Over 128–160 (AAIVYLAHNGNTSTNWFSICQQYTDFCQRSAGS) the chain is Extracellular. Asn-138 carries N-linked (GlcNAc...) asparagine glycosylation. The helical transmembrane segment at 161–181 (LIGSFGAMALMVLLIILSSIA) threads the bilayer. Over 182-185 (LSRR) the chain is Cytoplasmic.

Belongs to the Casparian strip membrane proteins (CASP) family. In terms of assembly, homodimer and heterodimers.

The protein resides in the cell membrane. In terms of biological role, regulates membrane-cell wall junctions and localized cell wall deposition. Required for establishment of the Casparian strip membrane domain (CSD) and the subsequent formation of Casparian strips, a cell wall modification of the root endodermis that determines an apoplastic barrier between the intraorganismal apoplasm and the extraorganismal apoplasm and prevents lateral diffusion. In Solanum demissum (Wild potato), this protein is Casparian strip membrane protein 1.